The primary structure comprises 109 residues: Putative membrane protein insertion efficiency factor (109 aa).

Belongs to the UPF0161 family.

It is found in the cell inner membrane. In terms of biological role, could be involved in insertion of integral membrane proteins into the membrane. This is Putative membrane protein insertion efficiency factor from Rhodopseudomonas palustris (strain BisB18).